Here is a 162-residue protein sequence, read N- to C-terminus: Caveolin-2 (162 aa).

The Cytoplasmic segment spans residues Met1–Lys86. Tyr19 is modified (phosphotyrosine; by SRC). Ser20 and Ser23 each carry phosphoserine. Residue Tyr27 is modified to Phosphotyrosine; by SRC. Ser36 carries the post-translational modification Phosphoserine. The segment at residues Phe87–Leu107 is an intramembrane region (helical). At Ser108 to Asp162 the chain is on the cytoplasmic side.

Belongs to the caveolin family. As to quaternary structure, monomer or homodimer. Interacts with CAV1; the interaction forms a stable heterooligomeric complex that is required for targeting to lipid rafts and for caveolae formation. Tyrosine phosphorylated forms do not form heterooligomers with the Tyr-19-phosphorylated form existing as a monomer or dimer, and the Tyr-27-form as a monomer only. Interacts (tyrosine phosphorylated form) with the SH2 domain-containing proteins, RASA1, NCK1 and SRC. Interacts (tyrosine phosphorylated form) with INSR, the interaction (Tyr-27-phosphorylated form) is increased on insulin stimulation. Interacts (Tyr-19 phosphorylated form) with MAPK1 (phosphorylated form); the interaction, promoted by insulin, leads to nuclear location and MAPK1 activation. Interacts with STAT3; the interaction is increased on insulin-induced tyrosine phosphorylation leading to STAT activation. In terms of processing, phosphorylated on serine and tyrosine residues. CAV1 promotes phosphorylation on Ser-23 which then targets the complex to the plasma membrane, lipid rafts and caveolae. Phosphorylation on Ser-36 appears to modulate mitosis in endothelial cells. Phosphorylation on both Tyr-19 and Tyr-27 is required for insulin-induced 'Ser-727' phosphorylation of STAT3 and its activation. Phosphorylation on Tyr-19 is required for insulin-induced phosphorylation of MAPK1 and DNA binding of STAT3. Tyrosine phosphorylation is induced by both EGF and insulin (By. similarity).

It localises to the nucleus. The protein resides in the cytoplasm. Its subcellular location is the golgi apparatus membrane. It is found in the cell membrane. The protein localises to the membrane. It localises to the caveola. Functionally, may act as a scaffolding protein within caveolar membranes. Interacts directly with G-protein alpha subunits and can functionally regulate their activity. Acts as an accessory protein in conjunction with CAV1 in targeting to lipid rafts and driving caveolae formation. The Ser-36 phosphorylated form has a role in modulating mitosis in endothelial cells. Positive regulator of cellular mitogenesis of the MAPK signaling pathway. Required for the insulin-stimulated nuclear translocation and activation of MAPK1 and STAT3, and the subsequent regulation of cell cycle progression. This is Caveolin-2 (CAV2) from Callithrix jacchus (White-tufted-ear marmoset).